The primary structure comprises 507 residues: Probable Xaa-Pro aminopeptidase HCAG_02413 (507 aa).

The Mn(2+) site is built by D283, D294, E431, and E469.

It belongs to the peptidase M24B family. Requires Mn(2+) as cofactor.

The catalysed reaction is Release of any N-terminal amino acid, including proline, that is linked to proline, even from a dipeptide or tripeptide.. Its function is as follows. Catalyzes the removal of a penultimate prolyl residue from the N-termini of peptides. The polypeptide is Probable Xaa-Pro aminopeptidase HCAG_02413 (Ajellomyces capsulatus (strain NAm1 / WU24) (Darling's disease fungus)).